Here is a 952-residue protein sequence, read N- to C-terminus: Leucine--tRNA ligase (952 aa).

Positions 66 to 77 match the 'HIGH' region motif; it reads PYPSGAGLHVGH. The short motif at 722–726 is the 'KMSKS' region element; it reads KMGKS. An ATP-binding site is contributed by K725.

The protein belongs to the class-I aminoacyl-tRNA synthetase family.

The protein localises to the cytoplasm. The catalysed reaction is tRNA(Leu) + L-leucine + ATP = L-leucyl-tRNA(Leu) + AMP + diphosphate. The sequence is that of Leucine--tRNA ligase from Corynebacterium glutamicum (strain ATCC 13032 / DSM 20300 / JCM 1318 / BCRC 11384 / CCUG 27702 / LMG 3730 / NBRC 12168 / NCIMB 10025 / NRRL B-2784 / 534).